We begin with the raw amino-acid sequence, 205 residues long: MLTLALPKGRLAEESIDLMISKGWLSAKPDPDSKELIYNDPLGKIRILLVRSQDVATYVEQCAADAGISGWDVLKEGGYDLATPLDLGIGKCRLSLAAPEGYTLEARHRKIRVATKYPNLAREFFFHKGLSCEIFKLYGSIELAPLVGLSDCIVDLVSTGGTLKANGLKELNIILESSARLVFNRSSLYGKRKEAAEFMDSLSKI.

The protein belongs to the ATP phosphoribosyltransferase family. Short subfamily. As to quaternary structure, heteromultimer composed of HisG and HisZ subunits.

It is found in the cytoplasm. It carries out the reaction 1-(5-phospho-beta-D-ribosyl)-ATP + diphosphate = 5-phospho-alpha-D-ribose 1-diphosphate + ATP. The protein operates within amino-acid biosynthesis; L-histidine biosynthesis; L-histidine from 5-phospho-alpha-D-ribose 1-diphosphate: step 1/9. Its function is as follows. Catalyzes the condensation of ATP and 5-phosphoribose 1-diphosphate to form N'-(5'-phosphoribosyl)-ATP (PR-ATP). Has a crucial role in the pathway because the rate of histidine biosynthesis seems to be controlled primarily by regulation of HisG enzymatic activity. In Leptospira borgpetersenii serovar Hardjo-bovis (strain JB197), this protein is ATP phosphoribosyltransferase.